Consider the following 834-residue polypeptide: Ras GTPase-activating protein 3 (834 aa).

2 C2 domains span residues 1–112 and 123–263; these read MAVE…DTWF and VQGK…EAWY. Alanine 2 carries the N-acetylalanine modification. Position 66 is a phosphotyrosine (tyrosine 66). Serine 77 bears the Phosphoserine mark. At threonine 110 the chain carries Phosphothreonine. Positions 346–561 constitute a Ras-GAP domain; that stretch reads GRVVPFISAI…DAVKNFLDLI (216 aa). The 102-residue stretch at 576–677 folds into the PH domain; the sequence is ILLKEGFMIK…WIDILTKVSQ (102 aa). The segment at 679–715 adopts a Btk-type zinc-finger fold; that stretch reads NQKRLAVYHPSAYLNGHWLCCRASSDTAAGCSPCTGG. Positions 687, 698, 699, and 709 each coordinate Zn(2+). Positions 806-834 are disordered; that stretch reads KYGSQEHPIGDKSFQSYIRQQSETPAHSM. Phosphoserine is present on residues serine 809 and serine 833. The span at 818 to 834 shows a compositional bias: polar residues; the sequence is SFQSYIRQQSETPAHSM.

Inhibitory regulator of the Ras-cyclic AMP pathway. May bind inositol tetrakisphosphate (IP4). The sequence is that of Ras GTPase-activating protein 3 (RASA3) from Bos taurus (Bovine).